Here is a 273-residue protein sequence, read N- to C-terminus: MTRIIDVSLFCFFLFSLGAMSQPSQNLTDCNQFPDTYQSNRNTVLSTLRNHSSLGSYYFNATAGLSPNTVYGMFLCIGNISKTSCSNCVHSATLEMDKSCESHDTSFMFSDECMVRYSDNSFFSLVEDSPATFSYSQNDSLSYPQFYNQTLPGKLDELILKAPSSFSSPVPYFVEDKEHVTQVEGSYDLEAMAQCSPDLDPSSCTVCLGLVVEKFSECCSQSRWARIHFPKCLLRYDISALQPNLTSLGVTTKGDDIFGRTFIAIMIGLLMGL.

Residues M1–S21 form the signal peptide. Gnk2-homologous domains are found at residues Q22 to F122 and D128 to L241.

Belongs to the cysteine-rich repeat secretory protein family.

It localises to the secreted. The sequence is that of Probable cysteine-rich repeat secretory protein 6 (CRRSP6) from Arabidopsis thaliana (Mouse-ear cress).